We begin with the raw amino-acid sequence, 311 residues long: MEPAHVPVLAQEAVAALAIKPEGVYVDATFGRGGHSRMILARLGTLGRLVALDRDPAAIAAGAALDDPRLTLRQSEFSRLGKVLDALGIARVDGILLDIGVSSPQLDDAARGFSFRFDAPLDMRMDPGSGISAADWLATAEEEEISEVIRTYGEERFAKPIARALVAARQKEAITSTAQLAGIIAAAVKKREPGQHPATRSFQAIRIYLNRELEELKAVLPQCVERLRAGGRLAVISFHSLEDRIVKRFLRTESLGEQAPPRLPIPAAMLKAGRLRLVGRAQHASDAEVAANPRARSAVLRVAERVAEAGA.

S-adenosyl-L-methionine-binding positions include 33 to 35 (GGH), Asp53, Phe77, Asp98, and Gln105.

Belongs to the methyltransferase superfamily. RsmH family.

The protein resides in the cytoplasm. The enzyme catalyses cytidine(1402) in 16S rRNA + S-adenosyl-L-methionine = N(4)-methylcytidine(1402) in 16S rRNA + S-adenosyl-L-homocysteine + H(+). Its function is as follows. Specifically methylates the N4 position of cytidine in position 1402 (C1402) of 16S rRNA. This chain is Ribosomal RNA small subunit methyltransferase H, found in Thiobacillus denitrificans (strain ATCC 25259 / T1).